A 74-amino-acid chain; its full sequence is Small ribosomal subunit protein bS18 (74 aa).

Belongs to the bacterial ribosomal protein bS18 family. As to quaternary structure, part of the 30S ribosomal subunit. Forms a tight heterodimer with protein bS6.

In terms of biological role, binds as a heterodimer with protein bS6 to the central domain of the 16S rRNA, where it helps stabilize the platform of the 30S subunit. This is Small ribosomal subunit protein bS18 from Chlorobaculum tepidum (strain ATCC 49652 / DSM 12025 / NBRC 103806 / TLS) (Chlorobium tepidum).